The chain runs to 563 residues: Cytidine monophosphate-N-acetylneuraminic acid hydroxylase (563 aa).

The 99-residue stretch at 10 to 108 (LSPAETANLK…VEMDGNDGLF (99 aa)) folds into the Rieske domain. C50, H52, C71, and H74 together coordinate [2Fe-2S] cluster.

The protein belongs to the CMP-Neu5Ac hydroxylase family. It depends on [2Fe-2S] cluster as a cofactor.

Its subcellular location is the cytoplasm. The catalysed reaction is CMP-N-acetyl-beta-neuraminate + 2 Fe(II)-[cytochrome b5] + O2 + 2 H(+) = CMP-N-glycoloyl-beta-neuraminate + 2 Fe(III)-[cytochrome b5] + H2O. It participates in amino-sugar metabolism; N-acetylneuraminate metabolism. Its function is as follows. Sialic acids are components of carbohydrate chains of glycoconjugates and are involved in cell-cell recognition and cell-pathogen interactions. Catalyzes the conversion of CMP-N-acetylneuraminic acid (CMP-Neu5Ac) into its hydroxylated derivative CMP-N-glycolylneuraminic acid (CMP-Neu5Gc), a sialic acid abundantly expressed at the surface of many cells. In Cricetulus griseus (Chinese hamster), this protein is Cytidine monophosphate-N-acetylneuraminic acid hydroxylase (CMAH).